We begin with the raw amino-acid sequence, 501 residues long: V-type proton ATPase subunit B 2 (501 aa).

R392 is a binding site for ATP.

The protein belongs to the ATPase alpha/beta chains family. As to quaternary structure, V-ATPase is a heteromultimeric enzyme made up of two complexes: the ATP-hydrolytic V1 complex and the proton translocation V0 complex. The V1 complex consists of three catalytic AB heterodimers that form a heterohexamer, three peripheral stalks each consisting of EG heterodimers, one central rotor including subunits D and F, and the regulatory subunits C and H. The proton translocation complex V0 consists of the proton transport subunit a, a ring of proteolipid subunits c9c'', rotary subunit d, subunits e and f, and the accessory subunits vah-19/Ac45 and vah-20/PRR. As to expression, predominantly expressed in male and hermaphrodite testis (at protein level).

It is found in the cytoplasm. Non-catalytic subunit of the V1 complex of vacuolar(H+)-ATPase (V-ATPase), a multisubunit enzyme composed of a peripheral complex (V1) that hydrolyzes ATP and a membrane integral complex (V0) that translocates protons. V-ATPase is responsible for acidifying and maintaining the pH of intracellular compartments and in some cell types, is targeted to the plasma membrane, where it is responsible for acidifying the extracellular environment. In neurons, required for necrotic cell death probably by promoting intracellular acidification. Required for spermatogenesis where it regulates the fibrous body-membranous organelle (FBMO) morphology in spermatocytes and the acidification of FBMO-derived secretory membranous organelles (MOs) as spermatids mature. This is V-type proton ATPase subunit B 2 from Caenorhabditis elegans.